A 527-amino-acid polypeptide reads, in one-letter code: Putative ribose/galactose/methyl galactoside import ATP-binding protein 2 (527 aa).

The segment at 1–31 (MFTARVARPMAGDDAPAASSGSTGSSAPPAS) is disordered. Over residues 12–31 (GDDAPAASSGSTGSSAPPAS) the composition is skewed to low complexity. 2 consecutive ABC transporter domains span residues 38–274 (LEVR…VGRE) and 284–523 (VPIG…RIMD). 70–77 (GENGAGKS) serves as a coordination point for ATP.

Belongs to the ABC transporter superfamily. Carbohydrate importer 2 (CUT2) (TC 3.A.1.2) family.

It localises to the cell inner membrane. It carries out the reaction D-ribose(out) + ATP + H2O = D-ribose(in) + ADP + phosphate + H(+). The enzyme catalyses D-galactose(out) + ATP + H2O = D-galactose(in) + ADP + phosphate + H(+). Its function is as follows. Part of an ABC transporter complex involved in carbohydrate import. Could be involved in ribose, galactose and/or methyl galactoside import. Responsible for energy coupling to the transport system. This Burkholderia lata (strain ATCC 17760 / DSM 23089 / LMG 22485 / NCIMB 9086 / R18194 / 383) protein is Putative ribose/galactose/methyl galactoside import ATP-binding protein 2.